A 287-amino-acid chain; its full sequence is ATP phosphoribosyltransferase (287 aa).

The protein belongs to the ATP phosphoribosyltransferase family. Long subfamily. Requires Mg(2+) as cofactor.

Its subcellular location is the cytoplasm. The catalysed reaction is 1-(5-phospho-beta-D-ribosyl)-ATP + diphosphate = 5-phospho-alpha-D-ribose 1-diphosphate + ATP. The protein operates within amino-acid biosynthesis; L-histidine biosynthesis; L-histidine from 5-phospho-alpha-D-ribose 1-diphosphate: step 1/9. Its activity is regulated as follows. Feedback inhibited by histidine. Functionally, catalyzes the condensation of ATP and 5-phosphoribose 1-diphosphate to form N'-(5'-phosphoribosyl)-ATP (PR-ATP). Has a crucial role in the pathway because the rate of histidine biosynthesis seems to be controlled primarily by regulation of HisG enzymatic activity. The chain is ATP phosphoribosyltransferase (hisG) from Methanothermobacter thermautotrophicus (strain ATCC 29096 / DSM 1053 / JCM 10044 / NBRC 100330 / Delta H) (Methanobacterium thermoautotrophicum).